The following is a 662-amino-acid chain: Envelope glycoprotein (662 aa).

An N-terminal signal peptide occupies residues 1 to 34 (MESPTHPKPSKDKTLSWNLVFLVGILFTIDIGMA). At 35 to 606 (NPSPHQVYNV…FNKSPWFTTL (572 aa)) the chain is on the extracellular side. N-linked (GlcNAc...) asparagine; by host glycans are attached at residues asparagine 43 and asparagine 58. 2 disulfide bridges follow: cysteine 115–cysteine 132 and cysteine 124–cysteine 137. The tract at residues 245–279 (AMGPNLVLPDQKPPSRQSQIESRVTPHHSQGNGGT) is disordered. A compositionally biased stretch (polar residues) spans 258 to 274 (PSRQSQIESRVTPHHSQ). 3 N-linked (GlcNAc...) asparagine; by host glycosylation sites follow: asparagine 286, asparagine 322, and asparagine 327. 3 disulfide bridges follow: cysteine 332-cysteine 335, cysteine 332-cysteine 559, and cysteine 551-cysteine 558. The CXXC signature appears at 332-335 (CWLC). Asparagine 351, asparagine 354, asparagine 394, asparagine 410, and asparagine 430 each carry an N-linked (GlcNAc...) asparagine; by host glycan. Residues 468 to 488 (ISLTVALMLGGLTVGGIAAGV) are fusion peptide. 2 coiled-coil regions span residues 496–545 (IETA…ILFL) and 555–591 (KEEC…SQQG). The immunosuppression stretch occupies residues 534 to 550 (LQNRRGLDILFLQEGGL). The CX6CC motif lies at 551–559 (CAALKEECC). Residues 607–627 (ISSIMGPLLILLLILLFGPCI) form a helical membrane-spanning segment. A lipid anchor (S-palmitoyl cysteine; by host) is attached at cysteine 626. Over 628–662 (LNRLVQFVKDRISVVQALILTQQYQQIKQYDPDRP) the chain is Cytoplasmic.

In terms of assembly, the mature envelope protein (Env) consists of a trimer of SU-TM heterodimers attached by a labile interchain disulfide bond. Post-translationally, specific enzymatic cleavages in vivo yield mature proteins. Envelope glycoproteins are synthesized as an inactive precursor that is N-glycosylated and processed likely by host cell furin or by a furin-like protease in the Golgi to yield the mature SU and TM proteins. The cleavage site between SU and TM requires the minimal sequence [KR]-X-[KR]-R. The R-peptide is released from the C-terminus of the cytoplasmic tail of the TM protein upon particle formation as a result of proteolytic cleavage by the viral protease. Cleavage of this peptide is required for TM to become fusogenic. In terms of processing, the CXXC motif is highly conserved across a broad range of retroviral envelope proteins. It is thought to participate in the formation of a labile disulfide bond possibly with the CX6CC motif present in the transmembrane protein. Isomerization of the intersubunit disulfide bond to an SU intrachain disulfide bond is thought to occur upon receptor recognition in order to allow membrane fusion. The transmembrane protein is palmitoylated. Post-translationally, the R-peptide is palmitoylated.

Its subcellular location is the virion membrane. It is found in the host cell membrane. In terms of biological role, the surface protein (SU) attaches the virus to the host cell by binding to its receptor. This interaction triggers the refolding of the transmembrane protein (TM) and is thought to activate its fusogenic potential by unmasking its fusion peptide. Fusion occurs at the host cell plasma membrane. Its function is as follows. The transmembrane protein (TM) acts as a class I viral fusion protein. Under the current model, the protein has at least 3 conformational states: pre-fusion native state, pre-hairpin intermediate state, and post-fusion hairpin state. During viral and target cell membrane fusion, the coiled coil regions (heptad repeats) assume a trimer-of-hairpins structure, positioning the fusion peptide in close proximity to the C-terminal region of the ectodomain. The formation of this structure appears to drive apposition and subsequent fusion of viral and target cell membranes. Membranes fusion leads to delivery of the nucleocapsid into the cytoplasm. The protein is Envelope glycoprotein (env) of Felidae (cat family).